A 200-amino-acid chain; its full sequence is Probable GTP-binding protein EngB (200 aa).

One can recognise an EngB-type G domain in the interval 25 to 199; sequence SGYEVAFAGR…ISVLDRWYEW (175 aa). GTP-binding positions include 33–40, 60–64, 78–81, 145–148, and 178–180; these read GRSNAGKS, GRTQL, DLPG, TKAD, and FSS. Residues Ser40 and Thr62 each contribute to the Mg(2+) site.

Belongs to the TRAFAC class TrmE-Era-EngA-EngB-Septin-like GTPase superfamily. EngB GTPase family. Mg(2+) serves as cofactor.

Necessary for normal cell division and for the maintenance of normal septation. This is Probable GTP-binding protein EngB from Legionella pneumophila (strain Paris).